The primary structure comprises 213 residues: MATAKPILYGAWISSCSHRVRIALNLKGVDYEYKAVNPRTDPDYEKINPIKYIPALVDGDFVLSDSLAIMLYLEDKYPQHPLVPKDIKTKGLDLQIANIVCSSIQPLQGYGVIGLHEGRLSPDESLEVVQRYIDKGFRAIEKLLDGCDSKYCVGDEVHLGDVCLAPQIHAAINRFQIDMTKYPILSRLHDAYMKIPAFQAALPQNQPDAPSAK.

A GST N-terminal domain is found at Ala4–Pro81. The region spanning Asp86–Ser211 is the GST C-terminal domain.

It belongs to the GST superfamily. Zeta family.

Its subcellular location is the cytoplasm. It carries out the reaction RX + glutathione = an S-substituted glutathione + a halide anion + H(+). Its function is as follows. Has a glutathione transferase activity with ethacrynic acid and nitrophenyl acetate. Has low glutathione peroxidase activity with cumene hydroperoxide. This chain is Glutathione S-transferase (GSTZ1), found in Triticum aestivum (Wheat).